The chain runs to 205 residues: Proteasome subunit beta type-3 (205 aa).

It belongs to the peptidase T1B family. In terms of assembly, the 26S proteasome consists of a 20S proteasome core and two 19S regulatory subunits. The 20S proteasome core is composed of 28 subunits that are arranged in four stacked rings, resulting in a barrel-shaped structure. The two end rings are each formed by seven alpha subunits, and the two central rings are each formed by seven beta subunits. The catalytic chamber with the active sites is on the inside of the barrel.

The protein resides in the cytoplasm. It localises to the nucleus. In terms of biological role, non-catalytic component of the proteasome, a multicatalytic proteinase complex which is characterized by its ability to cleave peptides with Arg, Phe, Tyr, Leu, and Glu adjacent to the leaving group at neutral or slightly basic pH. The proteasome has an ATP-dependent proteolytic activity. In Dictyostelium discoideum (Social amoeba), this protein is Proteasome subunit beta type-3 (psmB3).